The sequence spans 689 residues: Zinc finger protein 185 (689 aa).

Disordered stretches follow at residues 1-253 (MSIS…GRTK) and 298-534 (APDV…SCTS). Residues 35–52 (LKGDKSWITKQDESEGRT) show a composition bias toward basic and acidic residues. Residue S66 is modified to Phosphoserine. Residues 95-114 (IDSSSQPQQQFPKANGTPKS) show a composition bias toward polar residues. Phosphoserine is present on S153. Residues 157 to 166 (DTEEEEEEEV) are compositionally biased toward acidic residues. A Phosphoserine modification is found at P206. Basic and acidic residues-rich tracts occupy residues 217 to 232 (KRVEVVEEDGPSEKSQ) and 310 to 331 (NKDKEAPCSRELQRDLAGEEAF). The span at 338–349 (AARSSAQLSDGN) shows a compositional bias: polar residues. Composition is skewed to low complexity over residues 373–382 (SSSATSVSAV) and 434–444 (DPAVPAQQPAD). Position 447 is a phosphothreonine (T447). Positions 448–458 (PERQSSPSGSE) are enriched in polar residues. Residues S453 and S465 each carry the phosphoserine modification. Positions 504 to 524 (PTQQPADPSTPEQQNSPSGSE) are enriched in polar residues. The LIM zinc-binding domain occupies 627-689 (GICTYCNREI…HCGKCYEKLF (63 aa)).

In terms of tissue distribution, expressed in placenta, pancreas and kidney. Also expressed in prostate, testis, ovary and blood.

It is found in the cytoplasm. Its subcellular location is the cytoskeleton. It localises to the cell junction. The protein localises to the focal adhesion. Functionally, may be involved in the regulation of cellular proliferation and/or differentiation. The chain is Zinc finger protein 185 (ZNF185) from Homo sapiens (Human).